The chain runs to 147 residues: Large-conductance mechanosensitive channel (147 aa).

The next 2 membrane-spanning stretches (helical) occupy residues 8–28 (FIMKGNVLDLAVGVIIGAAFG) and 81–101 (GIFLNTTLDFLIMALVIFMII).

Belongs to the MscL family. In terms of assembly, homopentamer.

The protein resides in the cell inner membrane. In terms of biological role, channel that opens in response to stretch forces in the membrane lipid bilayer. May participate in the regulation of osmotic pressure changes within the cell. The chain is Large-conductance mechanosensitive channel from Trichlorobacter lovleyi (strain ATCC BAA-1151 / DSM 17278 / SZ) (Geobacter lovleyi).